Consider the following 414-residue polypeptide: Lipoyl synthase, mitochondrial (414 aa).

The N-terminal 31 residues, 1–31 (MAVSTSHFRSLCASRPLSRTAIVGHISCRSY), are a transit peptide targeting the mitochondrion. The interval 31-51 (YATTEPSPSATSTSTTTTARR) is disordered. Residues 32 to 48 (ATTEPSPSATSTSTTTT) are compositionally biased toward low complexity. Residues Cys-131, Cys-136, Cys-142, Cys-162, Cys-166, Cys-169, and Ser-377 each coordinate [4Fe-4S] cluster. Positions 145–366 (GSDKSAATAT…RQRALDMGFL (222 aa)) constitute a Radical SAM core domain.

The protein belongs to the radical SAM superfamily. Lipoyl synthase family. [4Fe-4S] cluster serves as cofactor.

Its subcellular location is the mitochondrion. It catalyses the reaction [[Fe-S] cluster scaffold protein carrying a second [4Fe-4S](2+) cluster] + N(6)-octanoyl-L-lysyl-[protein] + 2 oxidized [2Fe-2S]-[ferredoxin] + 2 S-adenosyl-L-methionine + 4 H(+) = [[Fe-S] cluster scaffold protein] + N(6)-[(R)-dihydrolipoyl]-L-lysyl-[protein] + 4 Fe(3+) + 2 hydrogen sulfide + 2 5'-deoxyadenosine + 2 L-methionine + 2 reduced [2Fe-2S]-[ferredoxin]. The protein operates within protein modification; protein lipoylation via endogenous pathway; protein N(6)-(lipoyl)lysine from octanoyl-[acyl-carrier-protein]: step 2/2. In terms of biological role, catalyzes the radical-mediated insertion of two sulfur atoms into the C-6 and C-8 positions of the octanoyl moiety bound to the lipoyl domains of lipoate-dependent enzymes, thereby converting the octanoylated domains into lipoylated derivatives. The chain is Lipoyl synthase, mitochondrial from Aspergillus fumigatus (strain CBS 144.89 / FGSC A1163 / CEA10) (Neosartorya fumigata).